A 614-amino-acid polypeptide reads, in one-letter code: 1-deoxy-D-xylulose-5-phosphate synthase (614 aa).

Thiamine diphosphate contacts are provided by residues H74 and 115–117; that span reads AHS. D146 provides a ligand contact to Mg(2+). Thiamine diphosphate-binding positions include 147-148, N175, Y282, and E363; that span reads GA. Residue N175 participates in Mg(2+) binding.

It belongs to the transketolase family. DXPS subfamily. Homodimer. Mg(2+) is required as a cofactor. It depends on thiamine diphosphate as a cofactor.

It carries out the reaction D-glyceraldehyde 3-phosphate + pyruvate + H(+) = 1-deoxy-D-xylulose 5-phosphate + CO2. It participates in metabolic intermediate biosynthesis; 1-deoxy-D-xylulose 5-phosphate biosynthesis; 1-deoxy-D-xylulose 5-phosphate from D-glyceraldehyde 3-phosphate and pyruvate: step 1/1. In terms of biological role, catalyzes the acyloin condensation reaction between C atoms 2 and 3 of pyruvate and glyceraldehyde 3-phosphate to yield 1-deoxy-D-xylulose-5-phosphate (DXP). This is 1-deoxy-D-xylulose-5-phosphate synthase from Nitrosomonas europaea (strain ATCC 19718 / CIP 103999 / KCTC 2705 / NBRC 14298).